Consider the following 538-residue polypeptide: Phosphoenolpyruvate carboxykinase (ATP) (538 aa).

Substrate contacts are provided by Arg-64, Tyr-205, and Lys-211. Residues Lys-211, His-230, and 246–254 (GLSGTGKTT) contribute to the ATP site. Mn(2+) contacts are provided by Lys-211 and His-230. Residue Asp-267 coordinates Mn(2+). ATP is bound by residues Glu-295, Arg-331, 447–448 (RI), and Thr-453. Position 331 (Arg-331) interacts with substrate.

This sequence belongs to the phosphoenolpyruvate carboxykinase (ATP) family. Monomer. Mn(2+) is required as a cofactor.

The protein localises to the cytoplasm. It carries out the reaction oxaloacetate + ATP = phosphoenolpyruvate + ADP + CO2. The protein operates within carbohydrate biosynthesis; gluconeogenesis. Functionally, involved in the gluconeogenesis. Catalyzes the conversion of oxaloacetate (OAA) to phosphoenolpyruvate (PEP) through direct phosphoryl transfer between the nucleoside triphosphate and OAA. The protein is Phosphoenolpyruvate carboxykinase (ATP) of Histophilus somni (strain 129Pt) (Haemophilus somnus).